Here is a 238-residue protein sequence, read N- to C-terminus: tRNA (guanine-N(1)-)-methyltransferase (238 aa).

Residues Gly110 and 129–134 (LGDFIL) contribute to the S-adenosyl-L-methionine site.

The protein belongs to the RNA methyltransferase TrmD family. As to quaternary structure, homodimer.

Its subcellular location is the cytoplasm. The enzyme catalyses guanosine(37) in tRNA + S-adenosyl-L-methionine = N(1)-methylguanosine(37) in tRNA + S-adenosyl-L-homocysteine + H(+). Its function is as follows. Specifically methylates guanosine-37 in various tRNAs. The polypeptide is tRNA (guanine-N(1)-)-methyltransferase (Clostridium botulinum (strain Alaska E43 / Type E3)).